Consider the following 273-residue polypeptide: Putative esterase/lipase 3 (273 aa).

Histidine 34 is a catalytic residue. The active-site Charge relay system is the serine 100.

Belongs to the lipase/esterase LIP3/BchO family.

This Mycoplasma genitalium (strain ATCC 33530 / DSM 19775 / NCTC 10195 / G37) (Mycoplasmoides genitalium) protein is Putative esterase/lipase 3.